We begin with the raw amino-acid sequence, 163 residues long: Endoribonuclease YbeY (163 aa).

Zn(2+) is bound by residues H123, H127, and H133.

Belongs to the endoribonuclease YbeY family. Requires Zn(2+) as cofactor.

It localises to the cytoplasm. Functionally, single strand-specific metallo-endoribonuclease involved in late-stage 70S ribosome quality control and in maturation of the 3' terminus of the 16S rRNA. In Helicobacter hepaticus (strain ATCC 51449 / 3B1), this protein is Endoribonuclease YbeY.